The primary structure comprises 235 residues: Carbonic anhydrase 1 (235 aa).

The Alpha-carbonic anhydrase domain maps to 1-235 (GNKQSPVDIK…LKGRTVKASF (235 aa)). Residue histidine 40 is the Proton donor/acceptor of the active site. 3 residues coordinate Zn(2+): histidine 69, histidine 71, and histidine 94. Substrate is bound by residues threonine 174 and 174–175 (TH).

Belongs to the alpha-carbonic anhydrase family. Zn(2+) serves as cofactor.

Its subcellular location is the cytoplasm. The catalysed reaction is hydrogencarbonate + H(+) = CO2 + H2O. It carries out the reaction urea = cyanamide + H2O. With respect to regulation, inhibited by acetazolamide. In terms of biological role, catalyzes the reversible hydration of carbon dioxide. Can hydrate cyanamide to urea. This Oryctolagus cuniculus (Rabbit) protein is Carbonic anhydrase 1 (CA1).